The primary structure comprises 100 residues: ATP-dependent Clp protease adapter protein ClpS (100 aa).

It belongs to the ClpS family. Binds to the N-terminal domain of the chaperone ClpA.

Its function is as follows. Involved in the modulation of the specificity of the ClpAP-mediated ATP-dependent protein degradation. The protein is ATP-dependent Clp protease adapter protein ClpS of Neisseria meningitidis serogroup B (strain ATCC BAA-335 / MC58).